Consider the following 327-residue polypeptide: Phenylalanine--tRNA ligase alpha subunit (327 aa).

Glu252 is a binding site for Mg(2+).

The protein belongs to the class-II aminoacyl-tRNA synthetase family. Phe-tRNA synthetase alpha subunit type 1 subfamily. As to quaternary structure, tetramer of two alpha and two beta subunits. Mg(2+) serves as cofactor.

The protein resides in the cytoplasm. The enzyme catalyses tRNA(Phe) + L-phenylalanine + ATP = L-phenylalanyl-tRNA(Phe) + AMP + diphosphate + H(+). The polypeptide is Phenylalanine--tRNA ligase alpha subunit (Shewanella putrefaciens (strain CN-32 / ATCC BAA-453)).